Consider the following 983-residue polypeptide: Ephrin type-A receptor 3 (983 aa).

A signal peptide spans 1-20 (MDCHLSILVLLGCCVLSCSG). The Extracellular segment spans residues 21 to 540 (ELSPQPSNEV…SFSISGENSH (520 aa)). The 178-residue stretch at 29–206 (EVNLLDSKTI…YFKKCPFTVK (178 aa)) folds into the Eph LBD domain. N-linked (GlcNAc...) asparagine glycans are attached at residues Asn231, Asn336, Asn390, Asn403, and Asn492. Fibronectin type-III domains follow at residues 324-434 (PPSA…TNQA) and 435-530 (APSP…TSPD). Residues 541–564 (VVMIAISAAVAIIVLTVVTYVLVG) form a helical membrane-spanning segment. Residues 565-983 (RFCGYHKSKH…TQSKNGPVPV (419 aa)) are Cytoplasmic-facing. Residues Tyr596 and Tyr602 each carry the phosphotyrosine; by autocatalysis modification. Positions 621-882 (ISIDKVVGAG…QIVSILDKLI (262 aa)) constitute a Protein kinase domain. Residues 628–633 (GAGEFG), Lys653, and 700–706 (EYMENGS) contribute to the ATP site. Residue Tyr701 is modified to Phosphotyrosine; by autocatalysis. Catalysis depends on Asp746, which acts as the Proton acceptor. 750-751 (RN) lines the ATP pocket. Residue Tyr779 is modified to Phosphotyrosine; by autocatalysis. The SAM domain maps to 911-975 (ATFHTTGDWL…ISTIKALETQ (65 aa)). The residue at position 937 (Tyr937) is a Phosphotyrosine. A PDZ-binding motif is present at residues 981-983 (VPV).

This sequence belongs to the protein kinase superfamily. Tyr protein kinase family. Ephrin receptor subfamily. As to quaternary structure, heterotetramer upon binding of the ligand. The heterotetramer is composed of an ephrin dimer and a receptor dimer. Oligomerization is probably required to induce biological responses. Forms a ternary EFNA5-EPHA3-ADAM10 complex mediating EFNA5 extracellular domain shedding by ADAM10 which regulates the EFNA5-EPHA3 complex internalization and function. Interacts (phosphorylated) with PTPN1; dephosphorylates EPHA3 and may regulate its trafficking and function. Interacts (phosphorylated) with CRK; mediates EFNA5-EPHA3 signaling through RHOA GTPase activation. Interacts with NCK1 (via SH2 domain); mediates EFNA5-EPHA3 signaling. Autophosphorylates upon activation by EFNA5. Phosphorylation on Tyr-602 mediates interaction with NCK1. Dephosphorylated by PTPN1. In terms of tissue distribution, greatest levels of expression occurring in the brain, also detected in testis. Expressed in myogenic progenitor cells.

Its subcellular location is the cell membrane. It is found in the secreted. It carries out the reaction L-tyrosyl-[protein] + ATP = O-phospho-L-tyrosyl-[protein] + ADP + H(+). Functionally, receptor tyrosine kinase which binds promiscuously membrane-bound ephrin family ligands residing on adjacent cells, leading to contact-dependent bidirectional signaling into neighboring cells. The signaling pathway downstream of the receptor is referred to as forward signaling while the signaling pathway downstream of the ephrin ligand is referred to as reverse signaling. Highly promiscuous for ephrin-A ligands it binds preferentially EFNA5. Upon activation by EFNA5 regulates cell-cell adhesion, cytoskeletal organization and cell migration. Plays a role in cardiac cells migration and differentiation and regulates the formation of the atrioventricular canal and septum during development probably through activation by EFNA1. Involved in the retinotectal mapping of neurons. May also control the segregation but not the guidance of motor and sensory axons during neuromuscular circuit development. The chain is Ephrin type-A receptor 3 (Epha3) from Mus musculus (Mouse).